Reading from the N-terminus, the 602-residue chain is MQQTQQGPKVQTQTLQGGAGNLNSIFQRSGRTDGGDARASEALAVFNKLKEEAIAQQDLHDDFLVFRFDRDQNRVGYSALLVVKRAAINGQQVIVTRPLVMPNDQITLPTKKLTIQNGMHQETIEAEADVQDVFTTQYWNRICDSIRQQTGKHDAMVINAGPTVIPADFDLKDELVLKQLLIKSVNLCDDMLAKRSGEQPFSVAMLKGTDETLAARLNFTGKPMHDSLGYPIRSDILVSLNRVKKPGQQENEFYEAEDKLNQVSCFVNLEYTPQPQQAIYGAPQQTQQLPPLTPAIVITDVRQAEWLKANTMELYLFALSNAFRVTANQSWARSLLPQLGKVKDMRDIGAIGYLSRLAARVETKTETFTDQNFAELLYNMVRPSPVFMSDLNRFGDNAAIENVFIDALGGVNQQRAVAAIIAGVNNLIGGGFEKFFDHNTMPIIQPYGTDIQLGYYLDGEGEKQDRRDLDVLGALNASDGNIQEWMSWYGTQCNVAVHPELRARQSKNFDRQYLGNSVTYTTRAHRGIWNPKFIEALDKAIASVGLTVAMDNVAQVFGAQRFSGNLAIADYAVTGTAQVSSGLVSNGGYNPQFGVGQGSGFY.

Positions 1-14 are enriched in low complexity; it reads MQQTQQGPKVQTQT. The disordered stretch occupies residues 1-33; sequence MQQTQQGPKVQTQTLQGGAGNLNSIFQRSGRTD.

The protein belongs to the Phikzvirus chimallin family. Homotetramer. The tetrameric protomers further assemble as a square grid.

It is found in the host cytoplasm. In terms of biological role, self-assembles to form a proteinaceous shell that encloses the viral DNA and compartmentalizes proteins and DNA during viral infection. This micrometer-scale compartment contains narrow pores and is the site of viral replication, with the proteins involved in DNA replication localized inside. Provides a surface for docking of capsids during packaging. Probably protects the viral genome against host defenses. This chain is Chimallin, found in Pseudomonas aeruginosa (Pseudomonas aeruginosa phage PhiPA3).